Reading from the N-terminus, the 1014-residue chain is Nebulette (1014 aa).

Positions 1-24 (MRVPVFEDIKDETEEEKIGEEENE) are disordered. Residues 9 to 24 (IKDETEEEKIGEEENE) show a composition bias toward acidic residues. Nebulin repeat units lie at residues 29–63 (FYKPVIEDLSMELARKCTELISDIRYKEEFKKSKD), 64–99 (KCTFVTDSPMLNHVKNIGAFISEAKYKGTIKADLSN), 100–136 (SLYKRMPATIDSVFAGEVTQLQSEVAYKQKHDAAKGF), 137–172 (SDYAHMKEPPEVKHAMEVNKHQSNISYRKDVQDTHT), 173–205 (YSAELDRPDIKMATQISKIISNAEYKKGQGIMN), 206–241 (KEPAVIGRPDFEHAVEASKLSSQIKYKEKFDNEMKD), 242–278 (KKHHYNPLESASFRQNQLAATLASNVKYKKDIQNMHD), 279–313 (PVSDLPNLLFLDHVLKASKMLSGREYKKLFEENKG), 314–348 (MYHFDADAVEHLHHKGNAVLQSQVKYKEEYEKNKG), 349–385 (KPMLEFVETPSYQASKEAQKMQSEKVYKEDFEKEIKG), 386–422 (RSSLDLDKTPEFLHVKYITNLLREKEYKKDLENEIKG), 423–459 (KGMELNSEVLDIQRAKRASEMASEKEYKKDLESIIKG), 460–496 (KGMQAGTDTLEMQHAKKAAEIASEKDYKRDLETEIKG), 497–533 (KGMQVSTDTLDVQRAKKASEMASQKQYKKDLENEIKG), 534–569 (KGMQVSMDIPDILRAKRTSEIYSQRKYKDEAEKMLS), 570–599 (NYSTIADTPEIQRIKTTQQNISAVFYKKEV), 600–635 (GAGTAVKDSPEIERVKKNQQNISSVKYKEEIKHATA), 636–666 (ISDPPELKRVKENQKNISNLQYKEQNYKATP), 667–693 (VSMTPEIERVRRNQEQLSAVKYKGELQ), 694–728 (RGTAISDPPELKRAKENQKNISNVYYRGQLGRATT), 729–759 (LSVTPEMERVKKNQENISSVKYTQDHKQMKG), 760–794 (RPSLILDTPAMRHVKEAQNHISMVKYHEDFEKTKG), and 795–830 (RGFTPVVDDPVTERVRKNTQVVSDAAYKGVHPHIVE). Position 96 is an omega-N-methylarginine (aspartate 96). Arginine 795 bears the Omega-N-methylarginine mark. A linker region spans residues 836–953 (GIIVDLKVWR…VSSMRSMQHS (118 aa)). Positions 954–1014 (PNLRTYRAMY…LPANYIEFVN (61 aa)) constitute an SH3 domain.

In terms of assembly, interacts (via nebulin repeats 1-5) with DESM (via rod region). Interacts (via SH3 domain) with XIRP2. As to quaternary structure, interacts with ZYX/Zyxin. As to expression, abundantly expressed in cardiac muscle, but not in skeletal or smooth muscle. Localized to Z-lines in cardiac cells and to dense bodies in nonmuscle cells. Isoform 2 is expressed in non-muscle cells such as in fibroblasts.

It is found in the cytoplasm. In terms of biological role, binds to actin and plays an important role in the assembly of the Z-disk. May functionally link sarcomeric actin to the desmin intermediate filaments in the heart muscle sarcomeres. May play a role in the assembly of focal adhesions. This Homo sapiens (Human) protein is Nebulette.